Consider the following 341-residue polypeptide: MLILTKVNIYMLIIVLWLYGYNFIISESQCPMINDDSFTLKRKYQIDSAESTIKMDKKRTKFQNRAKMVKEINQTIRAAQTHYETLKLGYIKFKRMIRTTTLEDIAPSIPNNQKTYKLFSDISAIGKASRNPSKMVYALLLYMFPNLFGDDHRFIRYRMHPMSKIKHKIFSPFKLNLIRILVEERFYNNECRSNKWRIIGTQVDKMLIAESDKYTIDARYNLKPMYRIKGKSEEDTLFIKQMVEQCVTSQELVEKVLKILFRDLFKSGEYKAYRYDDDVENGFIGLDTLKLNIVHDIVEPCMPVRRPVAKILCKEMVNKYFENPLHIIGKNLQECIDFVSE.

Residues 7–25 form a helical membrane-spanning segment; the sequence is VNIYMLIIVLWLYGYNFII. BEN domains are found at residues 112–222 and 233–328; these read NQKT…RYNL and EEDT…LHII.

It belongs to the orthopoxvirus OPG067 family. In terms of assembly, interacts with host CGAS; this interaction inhibits CGAS-mediated type I interferon response.

It is found in the host cytoplasm. Its subcellular location is the host nucleus. The protein localises to the membrane. Functionally, major early protein present in virus factories. The presence of BEN domains suggests a possible role in organization of viral DNA during replication or transcription. Plays an essential role in the inhibition of the cGAS-dependent type I IFN induction in host dendritic cells. Mechanistically, abolishes cGAMP production by triggering host CGAS degradation via a proteasome-dependent mechanism. The polypeptide is Protein OPG067 (OPG067) (Vaccinia virus (strain Western Reserve) (VACV)).